Reading from the N-terminus, the 538-residue chain is MALVTSFNMANPQPAIEGGISEVEIISQQVDEETKSIAPVQLVNFAYRDLPLAAVDLSTGGSQLLSNLDEEYQREGSDWLKPCCGKRAAVWQVFLLSASLNSFLVACVILVVILLTLELLIDTKLLQFSNAFQFAGVIHWISLVILSVFFSETVLRIVVLGIWDYIENKIEVFDGAVIILSLAPMVASTVANGPRSPWDAISLIIMFRIWRVKRVIDAYVLPVKLEMEMVTQQYEKAKAIQDEQLERLTQICQEQGFEIRQLRAHLAQQDLDLAAEREAALQAPHVLSQPRSRYKVVEAGTWAEETAAESIVEELRPSQEATVKDDMNSYISQYYNGPSSDSGAPEPAVCVVTTAAIDIHQPNVPSDLFSVDLPLKLSGNSTCASATSETTSHSTCGSVTRAQSASSQTLGSSTDCSTPREELLPSKPRSSPLPLLLPPQQLVAEATVQDLMSSLSKDPCPSHKALDPAPLAQPTPLGSVQTSPELEHRVSLFNQKNQEALPVLQINPVIHLQPTAGLEEKFRSLESKEPKLHTVPEA.

Residues 1–102 (MALVTSFNMA…VFLLSASLNS (102 aa)) lie on the Cytoplasmic side of the membrane. A helical membrane pass occupies residues 103-123 (FLVACVILVVILLTLELLIDT). Residues 124 to 130 (KLLQFSN) are Extracellular-facing. Residues 131-151 (AFQFAGVIHWISLVILSVFFS) form a helical membrane-spanning segment. At 152–169 (ETVLRIVVLGIWDYIENK) the chain is on the cytoplasmic side. A helical membrane pass occupies residues 170–190 (IEVFDGAVIILSLAPMVASTV). Over 191-199 (ANGPRSPWD) the chain is Extracellular. Residues 200–220 (AISLIIMFRIWRVKRVIDAYV) traverse the membrane as a helical segment. The Cytoplasmic portion of the chain corresponds to 221 to 538 (LPVKLEMEMV…EPKLHTVPEA (318 aa)). A coiled-coil region spans residues 232–278 (QQYEKAKAIQDEQLERLTQICQEQGFEIRQLRAHLAQQDLDLAAERE). Disordered stretches follow at residues 380 to 435 (NSTC…PLPL) and 453 to 483 (SSLSKDPCPSHKALDPAPLAQPTPLGSVQTS). Low complexity predominate over residues 381–396 (STCASATSETTSHSTC). Residues 397-417 (GSVTRAQSASSQTLGSSTDCS) show a composition bias toward polar residues. Residues 425–434 (PSKPRSSPLP) are compositionally biased toward low complexity.

As to quaternary structure, homodimer; disulfide-linked. In brain, present in the granule layer of the cerebellar cortex. Localizes on the post-synaptic side of glutamatergic mossy fibers and granule cells in the cerebellum (at protein level). As to expression, predominantly expressed in granule cells in cerebellum (at protein level).

The protein localises to the cell projection. It is found in the dendrite. The protein resides in the perikaryon. It localises to the cell membrane. Its function is as follows. Voltage-sensor protein present on the post-synaptic side of glutamatergic mossy fibers and granule cells in the cerebellum. Despite the presence of a voltage-sensor segment, does not form a functional ion channel and its precise role remains unclear. Undergoes both rapid and slow structural rearrangements in response to changes in voltage. Contains a zinc-binding site that can regulate the slow conformational transition. The polypeptide is Transmembrane protein 266 (Mus musculus (Mouse)).